Reading from the N-terminus, the 809-residue chain is Trimethylamine-N-oxide reductase 2 (809 aa).

Residues 1 to 31 (MTLTRREFIKHSGIAAGALVVTSAAPLPAWA) constitute a signal peptide (tat-type signal). Position 176 (Ser176) interacts with Mo-bis(molybdopterin guanine dinucleotide).

It belongs to the prokaryotic molybdopterin-containing oxidoreductase family. Requires Mo-bis(molybdopterin guanine dinucleotide) as cofactor. Predicted to be exported by the Tat system. The position of the signal peptide cleavage has not been experimentally proven.

Its subcellular location is the periplasm. The catalysed reaction is trimethylamine + 2 Fe(III)-[cytochrome c] + H2O = trimethylamine N-oxide + 2 Fe(II)-[cytochrome c] + 3 H(+). Its function is as follows. Reduces trimethylamine-N-oxide (TMAO) into trimethylamine; an anaerobic reaction coupled to energy-yielding reactions. Can also reduce other N- and S-oxide compounds such as 4-methylmorpholine-N-oxide and biotin sulfoxide (BSO), but with a lower catalytic efficiency. The protein is Trimethylamine-N-oxide reductase 2 (torZ) of Escherichia coli O157:H7.